The sequence spans 67 residues: MPKLKTKSGAKKRFIPKKSGKVKFRRAGVRHLATFGKTKKQKRHLRGTDHLAPMDAKKIKECFPYAR.

It belongs to the bacterial ribosomal protein bL35 family.

This Anaeromyxobacter sp. (strain Fw109-5) protein is Large ribosomal subunit protein bL35.